Here is a 438-residue protein sequence, read N- to C-terminus: Citrate synthase (438 aa).

Active-site residues include H306 and D364.

The protein belongs to the citrate synthase family.

The catalysed reaction is oxaloacetate + acetyl-CoA + H2O = citrate + CoA + H(+). It participates in carbohydrate metabolism; tricarboxylic acid cycle; isocitrate from oxaloacetate: step 1/2. This is Citrate synthase (gltA) from Bartonella quintana (strain Toulouse) (Rochalimaea quintana).